The chain runs to 193 residues: Anthranilate synthase component 2 (193 aa).

Residues Asn-3–Arg-193 enclose the Glutamine amidotransferase type-1 domain. L-glutamine is bound at residue Gly-57 to Gly-59. Cys-84 functions as the Nucleophile; for GATase activity in the catalytic mechanism. Residues Gln-88 and Ser-134–Leu-135 contribute to the L-glutamine site. Active-site for GATase activity residues include His-170 and Glu-172.

In terms of assembly, heterotetramer consisting of two non-identical subunits: a beta subunit (TrpG) and a large alpha subunit (TrpE).

It carries out the reaction chorismate + L-glutamine = anthranilate + pyruvate + L-glutamate + H(+). It functions in the pathway amino-acid biosynthesis; L-tryptophan biosynthesis; L-tryptophan from chorismate: step 1/5. In terms of biological role, part of a heterotetrameric complex that catalyzes the two-step biosynthesis of anthranilate, an intermediate in the biosynthesis of L-tryptophan. In the first step, the glutamine-binding beta subunit (TrpG) of anthranilate synthase (AS) provides the glutamine amidotransferase activity which generates ammonia as a substrate that, along with chorismate, is used in the second step, catalyzed by the large alpha subunit of AS (TrpE) to produce anthranilate. In the absence of TrpG, TrpE can synthesize anthranilate directly from chorismate and high concentrations of ammonia. The protein is Anthranilate synthase component 2 (trpG) of Haemophilus influenzae (strain ATCC 51907 / DSM 11121 / KW20 / Rd).